A 113-amino-acid chain; its full sequence is Small ribosomal subunit protein bS6 (113 aa).

It belongs to the bacterial ribosomal protein bS6 family.

In terms of biological role, binds together with bS18 to 16S ribosomal RNA. In Wigglesworthia glossinidia brevipalpis, this protein is Small ribosomal subunit protein bS6.